Reading from the N-terminus, the 127-residue chain is Fluoride-specific ion channel FluC (127 aa).

A run of 4 helical transmembrane segments spans residues 4–24, 37–57, 68–88, and 96–116; these read SLLVIAIGASLGAWLRWLLGM, TVVANMVGGYIIGLAIAFLAA, LIITGFCGGLTTFSTFSAETV, and LLWALGSISLHVVGSLAMTAA. Positions 75 and 78 each coordinate Na(+).

The protein belongs to the fluoride channel Fluc/FEX (TC 1.A.43) family.

The protein resides in the cell inner membrane. The catalysed reaction is fluoride(in) = fluoride(out). With respect to regulation, na(+) is not transported, but it plays an essential structural role and its presence is essential for fluoride channel function. Functionally, fluoride-specific ion channel. Important for reducing fluoride concentration in the cell, thus reducing its toxicity. The chain is Fluoride-specific ion channel FluC from Pseudomonas syringae pv. maculicola.